The following is a 277-amino-acid chain: MAIVKMKPTSAGRRGMVRVVTEGLHKGAPYAPLLEKKNSTAGRNSNGHITTRHKGGGHKHHYRVVDFKRNKDGIPAKVERIEYDPNRTAFIALLCYADGERRYIIAPRGIQAGAVLVSGAEAAIKVGNTLPIRNIPVGTTIHCIEMKPGKGAQIARSAGASAVLLAKEAAYAQVRLRSGEVRKINVNCRATIGEVGNEEQSLKKIGKAGANRWRGIRPTVRGVVMNPVDHPHGGGEGRTGEAREPVSPWGTPAKGYRTRNNKRTDNMIVRRRYSNKG.

Disordered stretches follow at residues 37–60 and 223–265; these read KNST…GHKH and VVMN…KRTD. Residues 39-49 are compositionally biased toward polar residues; that stretch reads STAGRNSNGHI. Positions 50–60 are enriched in basic residues; the sequence is TTRHKGGGHKH. The span at 229-244 shows a compositional bias: basic and acidic residues; it reads DHPHGGGEGRTGEARE.

The protein belongs to the universal ribosomal protein uL2 family. Part of the 50S ribosomal subunit. Forms a bridge to the 30S subunit in the 70S ribosome.

One of the primary rRNA binding proteins. Required for association of the 30S and 50S subunits to form the 70S ribosome, for tRNA binding and peptide bond formation. It has been suggested to have peptidyltransferase activity; this is somewhat controversial. Makes several contacts with the 16S rRNA in the 70S ribosome. The chain is Large ribosomal subunit protein uL2 from Neisseria meningitidis serogroup C (strain 053442).